Here is a 301-residue protein sequence, read N- to C-terminus: uncharacterized protein (301 aa).

The first 22 residues, 1–22 (MPGRFTVALVIALGGTCGVADA), serve as a signal peptide directing secretion. One can recognise a GP-PDE domain in the interval 31–300 (PMIVAHRAGT…DSPLAAQQWR (270 aa)).

This is an uncharacterized protein from Mycobacterium tuberculosis (strain ATCC 25618 / H37Rv).